The primary structure comprises 235 residues: Glycerol uptake facilitator protein 2 (235 aa).

A run of 6 helical transmembrane segments spans residues 4 to 24 (FLGEFLGTMVLIVFGVGSGAA), 39 to 59 (FICLAWGLAVTFGVYVAGQFG), 62 to 82 (GHLNPAVTVGFALFGYLPMAN), 83 to 103 (VWPYLLGQFLGAFIGAVIVII), 134 to 154 (VFNFLSETIATFFFIFVLLNL), and 165 to 185 (MVGLLIVVVGQTLGGTTGFAI). Positions 65–67 (NPA) match the NPA 1 motif. The short motif at 186–188 (NPA) is the NPA 2 element. A helical transmembrane segment spans residues 210–230 (WGYAWVPMFGPLLGGILAAGL).

This sequence belongs to the MIP/aquaporin (TC 1.A.8) family.

Its subcellular location is the cell membrane. Functionally, transporter that facilitates the transmembrane diffusion of water, dihydroxyacetone, glycerol and H(2)O(2). Is not permeable to urea and D/L-lactic acid. This chain is Glycerol uptake facilitator protein 2, found in Lactiplantibacillus plantarum (strain ATCC BAA-793 / NCIMB 8826 / WCFS1) (Lactobacillus plantarum).